A 270-amino-acid chain; its full sequence is A-type potassium channel modulatory protein KCNIP2 (270 aa).

A compositionally biased stretch (basic and acidic residues) spans 1 to 17 (MRGQGRKESLSDSRDLD). The segment at 1-33 (MRGQGRKESLSDSRDLDGSYDQLTGHPPGPTKK) is disordered. Position 9 is a phosphoserine (Ser9). Residues Cys45 and Cys46 are each lipidated (S-palmitoyl cysteine). One can recognise an EF-hand 1; degenerate domain in the interval 81–137 (FELSTVCHRPEGLEQLQEQTKFTRKELQVLYRGFKNECPSGIVNEENFKQIYSQFFP). 3 consecutive EF-hand domains span residues 140–175 (DSSTYATFLFNAFDTNHDGSVSFEDFVAGLSVILRG), 176–211 (TIDDRLNWAFNLYDLNKDGCITKEEMLDIMKSIYDM), and 224–259 (APREHVESFFQKMDRNKDGVVTIEEFIESCQKDENI). Positions 153, 155, 157, 159, 164, 189, 191, 193, 195, 200, 237, 239, 241, and 248 each coordinate Ca(2+). The interval 257–270 (ENIMRSMQLFDNVI) is interaction with KCND2.

This sequence belongs to the recoverin family. Component of heteromultimeric potassium channels. Identified in potassium channel complexes containing KCND1, KCND2, KCND3, KCNIP1, KCNIP2, KCNIP3, KCNIP4, DPP6 and DPP10. The KCND2-KCNIP2 channel complex contains four KCND2 and four KCNIP2 subunits. Interacts with KCND2. Probably part of a complex consisting of KCNIP1, KCNIP2 isoform 3 and KCND2. At least isoform 2 and isoform 3 can self-associate to form homodimers and homotetramers. Isoform 3 interacts with KCNIP1 in a calcium-dependent manner. Interacts with KCND3; each KCNIP2 monomer interacts with two adjacent KCND3 subunits, through both the N-terminal inactivation ball of a KCND3 subunit and a C-terminal helix from the adjacent KCND3 subunit, clamping them together; this interaction modulates the channel gating kinetics. In terms of processing, palmitoylated. Palmitoylation enhances association with the plasma membrane. As to expression, expressed in heart ventricle with isoform 1 as most prominent form.

It localises to the cell membrane. In terms of biological role, regulatory subunit of Kv4/D (Shal)-type voltage-gated rapidly inactivating A-type potassium channels. Modulates channel density, inactivation kinetics and rate of recovery from inactivation in a calcium-dependent and isoform-specific manner. Involved in KCND2 and KCND3 trafficking to the cell surface. May be required for the expression of I(To) currents in the heart. The chain is A-type potassium channel modulatory protein KCNIP2 from Mustela putorius furo (European domestic ferret).